The chain runs to 76 residues: Heat shock factor-binding protein 1 (76 aa).

It belongs to the HSBP1 family. In terms of assembly, homohexamer. Associates with heptad repeats of HSF1 trimers and probably also HSF1 monomers, and with HSP70. Association with HSF1 trimers and HSP70 coincides with attenuation of heat shock response and the conversion of HSF1 trimer to monomer.

It localises to the nucleus. In terms of biological role, negative regulator of the heat shock response. Negatively affects HSF1 DNA-binding activity. May have a role in the suppression of the activation of the stress response during the aging process. This is Heat shock factor-binding protein 1 (HSBP1) from Homo sapiens (Human).